The chain runs to 472 residues: Chromosomal replication initiator protein DnaA (472 aa).

The segment at 1–73 is domain I, interacts with DnaA modulators; it reads MSNMEHDRWS…LTCWQAELPE (73 aa). The interval 73 to 128 is domain II; that stretch reads EVCRIDLTVRSPMRAAVAKEAAAPVEHRRAEHRPATETRSHATVPASSNHDALGGS. A disordered region spans residues 92 to 127; it reads EAAAPVEHRRAEHRPATETRSHATVPASSNHDALGG. Positions 97 to 112 are enriched in basic and acidic residues; it reads VEHRRAEHRPATETRS. The tract at residues 129–351 is domain III, AAA+ region; that stretch reads PLDPRLTFAS…GAINRLLAHS (223 aa). Residues Gly176, Gly178, Lys179, and Thr180 each coordinate ATP. Residues 352 to 472 form a domain IV, binds dsDNA region; the sequence is KLNAQPVTLE…VDSLKRQLQE (121 aa).

Belongs to the DnaA family. As to quaternary structure, oligomerizes as a right-handed, spiral filament on DNA at oriC.

It is found in the cytoplasm. Its function is as follows. Plays an essential role in the initiation and regulation of chromosomal replication. ATP-DnaA binds to the origin of replication (oriC) to initiate formation of the DNA replication initiation complex once per cell cycle. Binds the DnaA box (a 9 base pair repeat at the origin) and separates the double-stranded (ds)DNA. Forms a right-handed helical filament on oriC DNA; dsDNA binds to the exterior of the filament while single-stranded (ss)DNA is stabiized in the filament's interior. The ATP-DnaA-oriC complex binds and stabilizes one strand of the AT-rich DNA unwinding element (DUE), permitting loading of DNA polymerase. After initiation quickly degrades to an ADP-DnaA complex that is not apt for DNA replication. Binds acidic phospholipids. This Rhodopseudomonas palustris (strain HaA2) protein is Chromosomal replication initiator protein DnaA.